Consider the following 261-residue polypeptide: MAATAREDGASGQERGQRGCEHYDRGCLLKAPCCDKLYTCRLCHDNNEDHQLDRFKVKEVQCINCEKIQHAQQTCEECSTLFGEYYCDICHLFDKDKKQYHCENCGICRIGPKEDFFHCLKCNLCLAMNLQGRHKCIENVSRQNCPICLEDIHTSRVVAHVLPCGHLLHRTCYEEMLKEGYRCPLCMHSALDMTRYWRQLDDEVAQTPMPSEYQNMTVDILCNDCNGRSTVQFHILGMKCKICESYNTAQAGGRRISLDQQ.

Residues 13–80 (QERGQRGCEH…AQQTCEECST (68 aa)) form a CHY-type zinc finger. Zn(2+)-binding residues include Cys-20, His-22, Cys-33, Cys-34, Cys-40, Cys-43, His-44, His-50, Cys-62, Cys-65, Cys-75, Cys-78, Cys-87, Cys-90, His-101, Cys-102, Cys-105, Cys-108, His-118, Cys-119, Cys-122, Cys-125, His-134, and Cys-136. A CTCHY-type zinc finger spans residues 82-144 (FGEYYCDICH…KCIENVSRQN (63 aa)). An RING-type zinc finger spans residues 145–189 (CPICLEDIHTSRVVAHVLPCGHLLHRTCYEEMLKEGYRCPLCMHS). Ser-257 bears the Phosphoserine mark.

In terms of assembly, monomer and homodimer. Interacts with AR, MDM2, KAT5, PLAG1, PLAGL2, COPE, UBE2D2 and GORAB/NTKLBP1. Post-translationally, subject to ubiquitination and proteasomal degradation. Interaction with PLAGL2 or KAT5 enhances protein stability.

Its subcellular location is the nucleus. It localises to the nucleus speckle. It is found in the cytoplasm. It catalyses the reaction S-ubiquitinyl-[E2 ubiquitin-conjugating enzyme]-L-cysteine + [acceptor protein]-L-lysine = [E2 ubiquitin-conjugating enzyme]-L-cysteine + N(6)-ubiquitinyl-[acceptor protein]-L-lysine.. It participates in protein modification; protein ubiquitination. Functionally, E3 ubiquitin-protein ligase that mediates ubiquitination of target proteins, including p53/TP53, TP73, HDAC1 and CDKN1B. Mediates ubiquitination and degradation of p53/TP53; preferentially acts on tetrameric p53/TP53. Catalyzes monoubiquitinates the translesion DNA polymerase POLH. Involved in the ribosome-associated quality control (RQC) pathway, which mediates the extraction of incompletely synthesized nascent chains from stalled ribosomes: RCHY1 acts downstream of NEMF and recognizes CAT tails associated with stalled nascent chains, leading to their ubiquitination and degradation. Its function is as follows. Has no E3 ubiquitin-protein ligase activity. The sequence is that of RING finger and CHY zinc finger domain-containing protein 1 (RCHY1) from Homo sapiens (Human).